Reading from the N-terminus, the 267-residue chain is Hydroxyethylthiazole kinase 2 (267 aa).

Met-41 lines the substrate pocket. Residues Lys-116 and Thr-166 each coordinate ATP. Residue Gly-193 coordinates substrate.

The protein belongs to the Thz kinase family. Requires Mg(2+) as cofactor.

It catalyses the reaction 5-(2-hydroxyethyl)-4-methylthiazole + ATP = 4-methyl-5-(2-phosphooxyethyl)-thiazole + ADP + H(+). It functions in the pathway cofactor biosynthesis; thiamine diphosphate biosynthesis; 4-methyl-5-(2-phosphoethyl)-thiazole from 5-(2-hydroxyethyl)-4-methylthiazole: step 1/1. Its function is as follows. Catalyzes the phosphorylation of the hydroxyl group of 4-methyl-5-beta-hydroxyethylthiazole (THZ). The chain is Hydroxyethylthiazole kinase 2 from Streptococcus pneumoniae serotype 4 (strain ATCC BAA-334 / TIGR4).